The chain runs to 301 residues: Syntaxin-17 (301 aa).

At S2 the chain carries N-acetylserine. The Cytoplasmic portion of the chain corresponds to 2-227 (SEDEEKVKLR…KNLQKAAKYK (226 aa)). K41 carries the N6-acetyllysine modification. Residues 49-128 (DKLHEEHINA…QVNDEELLQP (80 aa)) are a coiled coil. Y156 bears the Phosphotyrosine; by ABL1 mark. The 63-residue stretch at 161–223 (IPQDQNAAES…EEGTKNLQKA (63 aa)) folds into the t-SNARE coiled-coil homology domain. Residues 228 to 248 (LAALPVAGALIGGVVGGPIGL) traverse the membrane as a helical segment. Residues 228–274 (LAALPVAGALIGGVVGGPIGLLAGFKVAGIAAALGGGVLGFTGGKLI) form a necessary and sufficient for localization to autophagosome region. The Lumenal segment spans residues 249–253 (LAGFK). The chain crosses the membrane as a helical span at residues 254–274 (VAGIAAALGGGVLGFTGGKLI). The Cytoplasmic segment spans residues 275-301 (QRRKQKMMEKLTSSCPDLPSQSDKKRS). Residue S288 is modified to Phosphoserine. An Endoplasmic reticulum retention signal motif is present at residues 298 to 301 (KKRS).

It belongs to the syntaxin family. Forms a SNARE complex composed of VAMP8, SNAP29 and STX17 involved in fusion of autophagosome with lysosome. May interact with VTI1B. Probably interacts with BET1, SCFD1 and SEC22B. Interacts with PTPN2 and ABL1; involved in STX17 phosphorylation. Interacts with COPB1. Interacts with TMED9 and TMED10; the interaction is direct. Interacts with VAMP7. Interacts with RUBCNL/PACER; promoting targeting of RUBCNL/PACER to autophagosome. Interacts with VAMP8, SNAP29, VPS39 and VPS41; these interactions are increased in the absence of TMEM39A. Interacts with IRGM; promoting STX17 recruitment to autophagosomes. Interacts with ATG8 proteins GABARAP and MAP1LC3B. Interacts with RNF115; this interaction enhances STX17 stability which in turn promotes autophagosome maturation. Interacts with RAB39A (GTP-bound); the interaction promotes autophagosome-lysosome membrane fusion driven by STX17-SNAP29-VAMP8. Interacts with RAB39B; the interaction may promote a different fonction in autophagy as compared with RAB39A. Post-translationally, dephosphorylation by PTPN2; regulates exit from the endoplasmic reticulum. Phosphorylated at Tyr-156 probably by ABL1.

The protein resides in the endoplasmic reticulum membrane. It is found in the smooth endoplasmic reticulum membrane. Its subcellular location is the endoplasmic reticulum-Golgi intermediate compartment membrane. The protein localises to the cytoplasmic vesicle. It localises to the autophagosome membrane. The protein resides in the COPII-coated vesicle membrane. It is found in the cytoplasm. Its subcellular location is the cytosol. The protein localises to the mitochondrion membrane. It localises to the autolysosome membrane. Functionally, SNAREs, soluble N-ethylmaleimide-sensitive factor-attachment protein receptors, are essential proteins for fusion of cellular membranes. SNAREs localized on opposing membranes assemble to form a trans-SNARE complex, an extended, parallel four alpha-helical bundle that drives membrane fusion. STX17 is a SNARE of the autophagosome involved in autophagy through the direct control of autophagosome membrane fusion with the lysosome membrane. May also play a role in the early secretory pathway where it may maintain the architecture of the endoplasmic reticulum-Golgi intermediate compartment/ERGIC and Golgi and/or regulate transport between the endoplasmic reticulum, the ERGIC and the Golgi. This is Syntaxin-17 from Mus musculus (Mouse).